Consider the following 560-residue polypeptide: MSQQHTLPVTLSPALSQELLKTVPPPVNTQQEQMKQPTPLPPPCQKMPVELPVEVPSKQEEKHMTAVKGLPEQECEQQQQEPQEQELQQQHWEQHEEYQKAENPEQQLKQEKAQRDPQLNKQLEEEKKLLDQQLDQELVKRDEQLGMKKEQLLELPEQQEGHLKHLEQREGQLELPEQQEGQLKHLEQQKGQLELPEQQEGQLELPEQQEGQLKHLEQQEGQLKHLEHQEGQLEVPEEQVGQLKYLEQQEGQLKHLDQQEKQPELPEQQVGQLKHLEQQEGQPKHLEQQKGQLEHLEEQEGQLKHLEQQEGQLEHLEHQEGQLGLPEQQVQQLKQLEKEEGQPKHLEEEEGQLKHLVQQEGQLEHLVQQEGQLEHLVQQEGQLEQQEGQVEHLEQQVEHLEQLGQLKHLEEQEGQLKHLEQQQGQLGVPEQVGQPKNLEQEEKQLELPEQQEGQLKHLEKQEAQLELPEQQVGQPKHLEQQEKQLEPPEQQDGQLKHLEQQEGQLKDLEQQKGQLEQPVFAPAPGQVQDIQSALPTKGEVLLPLEHQQQKQEVQWPPKHK.

The segment covering 1–15 (MSQQHTLPVTLSPAL) has biased composition (polar residues). Disordered regions lie at residues 1 to 131 (MSQQ…KLLD), 150 to 359 (EQLL…LVQQ), and 404 to 534 (GQLK…QSAL). The segment covering 76–91 (EQQQQEPQEQELQQQH) has biased composition (low complexity). Composition is skewed to basic and acidic residues over residues 92–115 (WEQH…KAQR) and 159–172 (QEGH…REGQ). Residues 189 to 211 (QKGQLELPEQQEGQLELPEQQEG) show a composition bias toward low complexity. Basic and acidic residues-rich tracts occupy residues 212–231 (QLKH…HQEG), 252–264 (QLKH…KQPE), and 274–320 (KHLE…EHQE). A compositionally biased stretch (low complexity) spans 321–334 (GQLGLPEQQVQQLK). Basic and acidic residues-rich tracts occupy residues 335-353 (QLEK…EGQL), 404-420 (GQLK…KHLE), 454-463 (QLKHLEKQEA), 476-486 (KHLEQQEKQLE), and 494-510 (QLKH…DLEQ).

The protein belongs to the involucrin family. As to quaternary structure, directly or indirectly cross-linked to cornifelin (CNFN). Substrate of transglutaminase. Specific glutamines or lysines are cross-linked to keratins, desmoplakin and to inter involucrin molecules. Keratinocytes of epidermis and other stratified squamous epithelia.

It localises to the cytoplasm. Part of the insoluble cornified cell envelope (CE) of stratified squamous epithelia. The protein is Involucrin (IVL) of Pan paniscus (Pygmy chimpanzee).